We begin with the raw amino-acid sequence, 819 residues long: Putative U-box domain-containing protein 53 (819 aa).

Disordered regions lie at residues 208-309 (TSDT…NPQF) and 398-433 (KETE…KEKL). Residues 223 to 237 (ERTSSSCSSGSGANS) are compositionally biased toward low complexity. Residues 238 to 260 (DVMSNALKSNPHTLSNKRMQNLP) show a composition bias toward polar residues. Residues 278–296 (DETKKRSSDAAEEASKRSS) show a composition bias toward basic and acidic residues. Residues 297–307 (PETSRSVSWNP) show a composition bias toward polar residues. A coiled-coil region spans residues 395–437 (IAKKETEKFEQKRREEREAAQRREAEMKATHEAKEKEKLEESS). Residues 460–728 (FSEDLKIGMG…DLEDQILPVL (269 aa)) enclose the Protein kinase domain. ATP is bound by residues 466-474 (IGMGAYGDV) and Lys487. Asp582 (proton acceptor) is an active-site residue. Residues 748 to 819 (QPPSHFFCPL…AIVEWRNRNQ (72 aa)) form the U-box domain.

The protein belongs to the protein kinase superfamily. Ser/Thr protein kinase family.

The enzyme catalyses L-seryl-[protein] + ATP = O-phospho-L-seryl-[protein] + ADP + H(+). It catalyses the reaction L-threonyl-[protein] + ATP = O-phospho-L-threonyl-[protein] + ADP + H(+). The catalysed reaction is S-ubiquitinyl-[E2 ubiquitin-conjugating enzyme]-L-cysteine + [acceptor protein]-L-lysine = [E2 ubiquitin-conjugating enzyme]-L-cysteine + N(6)-ubiquitinyl-[acceptor protein]-L-lysine.. It participates in protein modification; protein ubiquitination. Functions as an E3 ubiquitin ligase. The sequence is that of Putative U-box domain-containing protein 53 (PUB53) from Arabidopsis thaliana (Mouse-ear cress).